The chain runs to 586 residues: Malonate--CoA ligase ACSF3, mitochondrial (586 aa).

Residues 1–89 (MPLPYVGMAL…SREICQLRAC (89 aa)) constitute a mitochondrion transit peptide. Residues 203–211 (TSGTTGRPK), D457, R471, and K563 contribute to the ATP site.

This sequence belongs to the ATP-dependent AMP-binding enzyme family.

The protein localises to the mitochondrion. It carries out the reaction tetracosanoate + ATP + CoA = tetracosanoyl-CoA + AMP + diphosphate. The catalysed reaction is malonate + ATP + CoA = malonyl-CoA + AMP + diphosphate. Functionally, catalyzes the initial reaction in intramitochondrial fatty acid synthesis, by activating malonate and methylmalonate, but not acetate, into their respective CoA thioester. May have some preference toward very-long-chain substrates. The sequence is that of Malonate--CoA ligase ACSF3, mitochondrial from Bos taurus (Bovine).